The following is a 979-amino-acid chain: Glycine dehydrogenase (decarboxylating) (979 aa).

Lysine 724 carries the N6-(pyridoxal phosphate)lysine modification.

Belongs to the GcvP family. The glycine cleavage system is composed of four proteins: P, T, L and H. The cofactor is pyridoxal 5'-phosphate.

It catalyses the reaction N(6)-[(R)-lipoyl]-L-lysyl-[glycine-cleavage complex H protein] + glycine + H(+) = N(6)-[(R)-S(8)-aminomethyldihydrolipoyl]-L-lysyl-[glycine-cleavage complex H protein] + CO2. In terms of biological role, the glycine cleavage system catalyzes the degradation of glycine. The P protein binds the alpha-amino group of glycine through its pyridoxal phosphate cofactor; CO(2) is released and the remaining methylamine moiety is then transferred to the lipoamide cofactor of the H protein. In Nostoc punctiforme (strain ATCC 29133 / PCC 73102), this protein is Glycine dehydrogenase (decarboxylating).